We begin with the raw amino-acid sequence, 214 residues long: MRPDRPRDPVTGPDEGPESPYPIRMSGPVIKGFGRGSKELGIPTANIPADELSQHPELSVGVYYGVVALDPARFSTGETVLPAVLSIGYNPFYKNESKSIEIHIMPPLSAPSPTATTSTDGQVTFHKLPDFYGTPLNLLILGYIRPEYDYISSEALIEDIRVDCEVARRSLQRPAYRCYLDARAVEDPACGGDDCGIVVDAIDGGAMRGMRFCI.

Residues 1–27 (MRPDRPRDPVTGPDEGPESPYPIRMSG) form a disordered region. The Mg(2+) site is built by threonine 44 and asparagine 46. Catalysis depends on glutamate 101, which acts as the Nucleophile.

The protein belongs to the flavokinase family. Zn(2+) is required as a cofactor. It depends on Mg(2+) as a cofactor.

The enzyme catalyses riboflavin + ATP = FMN + ADP + H(+). It participates in cofactor biosynthesis; FMN biosynthesis; FMN from riboflavin (ATP route): step 1/1. Its function is as follows. Catalyzes the phosphorylation of riboflavin (vitamin B2) to form flavin mononucleotide (FMN) coenzyme. In Aspergillus niger (strain ATCC MYA-4892 / CBS 513.88 / FGSC A1513), this protein is Riboflavin kinase (fmn1).